A 131-amino-acid chain; its full sequence is Small ribosomal subunit protein uS8 (131 aa).

It belongs to the universal ribosomal protein uS8 family. As to quaternary structure, part of the 30S ribosomal subunit. Contacts proteins S5 and S12.

In terms of biological role, one of the primary rRNA binding proteins, it binds directly to 16S rRNA central domain where it helps coordinate assembly of the platform of the 30S subunit. The polypeptide is Small ribosomal subunit protein uS8 (Nitrosomonas eutropha (strain DSM 101675 / C91 / Nm57)).